Here is a 173-residue protein sequence, read N- to C-terminus: Pathogenesis-related protein 1A/1B (173 aa).

The first 20 residues, methionine 1–alanine 20, serve as a signal peptide directing secretion.

Belongs to the thaumatin family.

In Hordeum vulgare (Barley), this protein is Pathogenesis-related protein 1A/1B.